A 273-amino-acid polypeptide reads, in one-letter code: Tyrosinase (273 aa).

A signal peptide spans 1-18 (MCLLALGFLLGILQPASG). N-linked (GlcNAc...) asparagine glycosylation is found at asparagine 86 and asparagine 169. Positions 180, 202, and 211 each coordinate Cu cation. Residue asparagine 230 is glycosylated (N-linked (GlcNAc...) asparagine).

This sequence belongs to the tyrosinase family. Cu(2+) is required as a cofactor.

It localises to the melanosome membrane. The catalysed reaction is 2 L-dopa + O2 = 2 L-dopaquinone + 2 H2O. The enzyme catalyses L-tyrosine + O2 = L-dopaquinone + H2O. In terms of biological role, this is a copper-containing oxidase that functions in the formation of pigments such as melanins and other polyphenolic compounds. The protein is Tyrosinase (TYR) of Pelodiscus sinensis (Chinese softshell turtle).